A 66-amino-acid chain; its full sequence is Beta-toxin ChFII.9 (66 aa).

Positions 1–66 (KEGYIVDYHT…VWPLPNKRCK (66 aa)) constitute an LCN-type CS-alpha/beta domain. Intrachain disulfides connect C12-C65, C16-C41, C25-C46, and C29-C48. The residue at position 66 (K66) is a Lysine amide.

In terms of tissue distribution, expressed by the venom gland.

It localises to the secreted. In terms of biological role, beta toxins bind voltage independently at site-4 of sodium channels (Nav) and shift the activation voltage toward more negative potentials, thereby affecting sodium channel activation CC and promoting spontaneous and repetitive firing. The sequence is that of Beta-toxin ChFII.9 from Centruroides hirsutipalpus (Scorpion).